Reading from the N-terminus, the 245-residue chain is Ribonuclease PH (245 aa).

Phosphate contacts are provided by residues arginine 86 and 124-126 (GTR).

This sequence belongs to the RNase PH family. Homohexameric ring arranged as a trimer of dimers.

The enzyme catalyses tRNA(n+1) + phosphate = tRNA(n) + a ribonucleoside 5'-diphosphate. In terms of biological role, phosphorolytic 3'-5' exoribonuclease that plays an important role in tRNA 3'-end maturation. Removes nucleotide residues following the 3'-CCA terminus of tRNAs; can also add nucleotides to the ends of RNA molecules by using nucleoside diphosphates as substrates, but this may not be physiologically important. Probably plays a role in initiation of 16S rRNA degradation (leading to ribosome degradation) during starvation. This chain is Ribonuclease PH, found in Bacillus velezensis (strain DSM 23117 / BGSC 10A6 / LMG 26770 / FZB42) (Bacillus amyloliquefaciens subsp. plantarum).